The sequence spans 263 residues: 4-hydroxy-tetrahydrodipicolinate reductase (263 aa).

NAD(+)-binding positions include 8-13 (GACGRM), Asp-34, 99-101 (GTT), and 125-128 (SPNY). Catalysis depends on His-157, which acts as the Proton donor/acceptor. (S)-2,3,4,5-tetrahydrodipicolinate is bound at residue His-158. Lys-161 (proton donor) is an active-site residue. 167-168 (GT) contributes to the (S)-2,3,4,5-tetrahydrodipicolinate binding site.

It belongs to the DapB family.

It is found in the cytoplasm. It catalyses the reaction (S)-2,3,4,5-tetrahydrodipicolinate + NAD(+) + H2O = (2S,4S)-4-hydroxy-2,3,4,5-tetrahydrodipicolinate + NADH + H(+). It carries out the reaction (S)-2,3,4,5-tetrahydrodipicolinate + NADP(+) + H2O = (2S,4S)-4-hydroxy-2,3,4,5-tetrahydrodipicolinate + NADPH + H(+). The protein operates within amino-acid biosynthesis; L-lysine biosynthesis via DAP pathway; (S)-tetrahydrodipicolinate from L-aspartate: step 4/4. Functionally, catalyzes the conversion of 4-hydroxy-tetrahydrodipicolinate (HTPA) to tetrahydrodipicolinate. This chain is 4-hydroxy-tetrahydrodipicolinate reductase, found in Methanosarcina barkeri (strain Fusaro / DSM 804).